A 361-amino-acid polypeptide reads, in one-letter code: tRNA-specific 2-thiouridylase MnmA (361 aa).

ATP-binding positions include 6 to 13 and Leu-32; that span reads AMSGGVDS. Cys-99 functions as the Nucleophile in the catalytic mechanism. Cys-99 and Cys-196 form a disulfide bridge. Gly-123 is an ATP binding site. An interaction with tRNA region spans residues 145 to 147; sequence RDQ. Cys-196 serves as the catalytic Cysteine persulfide intermediate.

This sequence belongs to the MnmA/TRMU family.

Its subcellular location is the cytoplasm. The enzyme catalyses S-sulfanyl-L-cysteinyl-[protein] + uridine(34) in tRNA + AH2 + ATP = 2-thiouridine(34) in tRNA + L-cysteinyl-[protein] + A + AMP + diphosphate + H(+). Functionally, catalyzes the 2-thiolation of uridine at the wobble position (U34) of tRNA, leading to the formation of s(2)U34. This Gluconobacter oxydans (strain 621H) (Gluconobacter suboxydans) protein is tRNA-specific 2-thiouridylase MnmA.